The primary structure comprises 87 residues: Mu-theraphotoxin-Cg1a (87 aa).

Positions 1–21 are cleaved as a signal peptide; that stretch reads MKVLVLITLAVLGAMFVWTSA. The propeptide occupies 22–50; that stretch reads AELEERGSDQRDSPAWVKSMERIFQSEER. Intrachain disulfides connect C52–C66, C59–C71, and C65–C79.

This sequence belongs to the neurotoxin 10 (Hwtx-1) family. 39 (Jztx-34) subfamily. Expressed by the venom gland.

The protein resides in the secreted. Potent and selective inhibitor of hNav1.7/SCN9A (IC(50)=610 nM). Also shows a weak activity towards Nav1.3/SCN3A (IC(50)=7950 nM). In addition, inhibits voltage-gated potassium channels (Kv) in rat DRG neurons. It does not alter the voltage dependence of activation, but it causes a small hyperpolarizing shift in the steady-state inactivations of Nav1.7/SNC9A. Chimera experiments show that the toxin binds to the DIIS3-S4 linker (site 4) of Nav1.7/SCN9A, whereas Nav1.7/SCN9A Asp-827 residue is shown by substitution experiments to be critical for its sensitivity. The toxin traps the domain II voltage sensor in the closed configuration, and not in an outward position. In vivo, shows analgesic activity in three rodent pain models (formalin-induced, acid-induced, and thermal). This chain is Mu-theraphotoxin-Cg1a, found in Chilobrachys guangxiensis (Chinese earth tiger tarantula).